The primary structure comprises 307 residues: Epimerase family protein ML0860 (307 aa).

This sequence belongs to the NAD(P)-dependent epimerase/dehydratase family. SDR39U1 subfamily.

This Mycobacterium leprae (strain TN) protein is Epimerase family protein ML0860.